Reading from the N-terminus, the 557-residue chain is NAD(P)H-quinone oxidoreductase chain 4 (557 aa).

14 helical membrane-spanning segments follow: residues 25-45, 57-77, 111-131, 133-153, 157-177, 189-209, 230-250, 264-284, 298-318, 327-347, 353-373, 397-417, 438-458, and 485-505; these read FPWL…VPFI, YALF…LKGF, LILL…PVSF, PKLF…VFAV, LLFF…LAIW, FIIY…AMGF, GFQL…LPIV, TAPV…YALL, FAPL…LTSF, IAYS…SFST, AMLQ…LVGA, FALW…SGFV, IVIA…LLSM, and IYII…PRIM.

Belongs to the complex I subunit 4 family.

The protein resides in the cellular thylakoid membrane. The catalysed reaction is a plastoquinone + NADH + (n+1) H(+)(in) = a plastoquinol + NAD(+) + n H(+)(out). It catalyses the reaction a plastoquinone + NADPH + (n+1) H(+)(in) = a plastoquinol + NADP(+) + n H(+)(out). Its function is as follows. NDH-1 shuttles electrons from NAD(P)H, via FMN and iron-sulfur (Fe-S) centers, to quinones in the respiratory chain. The immediate electron acceptor for the enzyme in this species is believed to be plastoquinone. Couples the redox reaction to proton translocation (for every two electrons transferred, four hydrogen ions are translocated across the cytoplasmic membrane), and thus conserves the redox energy in a proton gradient. The chain is NAD(P)H-quinone oxidoreductase chain 4 from Prochlorococcus marinus (strain SARG / CCMP1375 / SS120).